We begin with the raw amino-acid sequence, 201 residues long: IMP cyclohydrolase (201 aa).

Belongs to the archaeal IMP cyclohydrolase family.

It carries out the reaction IMP + H2O = 5-formamido-1-(5-phospho-D-ribosyl)imidazole-4-carboxamide. Its pathway is purine metabolism; IMP biosynthesis via de novo pathway; IMP from 5-formamido-1-(5-phospho-D-ribosyl)imidazole-4-carboxamide: step 1/1. Catalyzes the cyclization of 5-formylamidoimidazole-4-carboxamide ribonucleotide to IMP. The sequence is that of IMP cyclohydrolase from Methanococcus maripaludis (strain DSM 14266 / JCM 13030 / NBRC 101832 / S2 / LL).